The following is a 600-amino-acid chain: Potassium-transporting ATPase potassium-binding subunit (600 aa).

11 consecutive transmembrane segments (helical) span residues 6-26, 65-85, 136-156, 179-199, 283-303, 314-334, 367-387, 419-439, 458-478, 523-543, and 566-586; these read IILLAVFLLVLLVLAYPLGTY, GYAIALLVFNVLGTFFVYAVQ, ALSGQNFFSAATGIAVIYALI, LYVLLPLSVIVAVVLMSQGVI, FSNLVEMLAIFLIPAALCFTF, WAILGAMTLLFVVLTAVVMGA, FGISASTLFAAVTTAASCGAV, GLYGMLVFAILAVFIAGLMIG, SLVILVTPCLVLLGTAIAVVL, VMLAIAMWFGRFAVIVPVLAI, and LFIALLVGTVLLVGVLNYVPA.

The protein belongs to the KdpA family. As to quaternary structure, the system is composed of three essential subunits: KdpA, KdpB and KdpC.

It localises to the cell inner membrane. Its function is as follows. Part of the high-affinity ATP-driven potassium transport (or Kdp) system, which catalyzes the hydrolysis of ATP coupled with the electrogenic transport of potassium into the cytoplasm. This subunit binds the periplasmic potassium ions and delivers the ions to the membrane domain of KdpB through an intramembrane tunnel. This Janthinobacterium sp. (strain Marseille) (Minibacterium massiliensis) protein is Potassium-transporting ATPase potassium-binding subunit.